Reading from the N-terminus, the 210-residue chain is CASP-like protein 3A2 (210 aa).

Residues 1 to 45 (MMMNGQKMAAAEVAVQLPESKMVTENIGGAAAAMRPFGRKAEVMN) are Cytoplasmic-facing. Residues 46–66 (VLLRVLCMVTSVAALSSMVTA) traverse the membrane as a helical segment. At 67-92 (QQSSTVSIYGFMLPIQSKWSFSHSFE) the chain is on the extracellular side. The helical transmembrane segment at 93-113 (YVVGVSAVVAAHSLLQLLISV) threads the bilayer. The Cytoplasmic segment spans residues 114 to 128 (SRLLRKSPVIQSRSH). A helical membrane pass occupies residues 129 to 149 (AWLVFAGDQVFAYAMISAGAA). Over 150–178 (ASGVTNLNRTGIRHTALPNFCKPLQSFCD) the chain is Extracellular. The N-linked (GlcNAc...) asparagine glycan is linked to Asn157. Residues 179–199 (HVAVSIFFTFLSCFLLAASAV) traverse the membrane as a helical segment. Over 200 to 210 (QEVIWLSRSKY) the chain is Cytoplasmic.

This sequence belongs to the Casparian strip membrane proteins (CASP) family. As to quaternary structure, homodimer and heterodimers.

Its subcellular location is the cell membrane. The protein is CASP-like protein 3A2 of Populus trichocarpa (Western balsam poplar).